Here is a 119-residue protein sequence, read N- to C-terminus: Large ribosomal subunit protein bL20 (119 aa).

This sequence belongs to the bacterial ribosomal protein bL20 family.

Its function is as follows. Binds directly to 23S ribosomal RNA and is necessary for the in vitro assembly process of the 50S ribosomal subunit. It is not involved in the protein synthesizing functions of that subunit. In Geobacillus sp. (strain WCH70), this protein is Large ribosomal subunit protein bL20.